Here is a 30-residue protein sequence, read N- to C-terminus: Agglutinin alpha-1 chain (30 aa).

The Jacalin-type lectin domain maps to 1–30 (GVAFDDGSYTGIREINFEYNRETAIGGXQV).

The protein belongs to the jacalin lectin family. In terms of assembly, tetramer of four alpha chains associated with two or four beta chains.

Functionally, N-acetyl-galactosamine and D-galactose specific lectin. Binds the Tn-antigen structure GalNAc-alpha-1-O-Ser, the T-antigen structure Gal-beta1-3-GalNAc and IgA. In Morus nigra (Black mulberry), this protein is Agglutinin alpha-1 chain.